A 304-amino-acid polypeptide reads, in one-letter code: Fluoroacetate dehalogenase (304 aa).

The region spanning 26-151 is the AB hydrolase-1 domain; it reads PALLLLHGFP…FVARAYWHWY (126 aa). The Nucleophile role is filled by D104. Positions 105, 108, 149, 150, and 212 each coordinate fluoroacetate. H271 acts as the Proton acceptor in catalysis.

It belongs to the AB hydrolase superfamily. Epoxide hydrolase family. Homodimer.

It carries out the reaction a haloacetate + H2O = a halide anion + glycolate + H(+). The catalysed reaction is fluoroacetate + H2O = fluoride + glycolate + H(+). Catalyzes the hydrolytic defluorination of fluoroacetate to produce glycolate. Has only very low activity towards chloroacetate and bromoacetate. The chain is Fluoroacetate dehalogenase (fac-dex) from Burkholderia sp.